An 89-amino-acid polypeptide reads, in one-letter code: Elongation factor 1-beta (89 aa).

This sequence belongs to the EF-1-beta/EF-1-delta family.

In terms of biological role, promotes the exchange of GDP for GTP in EF-1-alpha/GDP, thus allowing the regeneration of EF-1-alpha/GTP that could then be used to form the ternary complex EF-1-alpha/GTP/AAtRNA. In Methanococcus maripaludis (strain C7 / ATCC BAA-1331), this protein is Elongation factor 1-beta.